The sequence spans 84 residues: UPF0473 protein CKL_1327 (84 aa).

Belongs to the UPF0473 family.

The chain is UPF0473 protein CKL_1327 from Clostridium kluyveri (strain ATCC 8527 / DSM 555 / NBRC 12016 / NCIMB 10680 / K1).